We begin with the raw amino-acid sequence, 445 residues long: Cyclic GMP-AMP synthase-like receptor 1 (445 aa).

Residues Glu70, Asp72, and Asp186 each coordinate Mg(2+). 70 to 72 provides a ligand contact to ATP; it reads EYD. Residues Asp186 and 232–239 each bind GTP; that span reads RTSFYEAE. Residues 236 to 239, Lys257, and 270 to 274 contribute to the ATP site; these read YEAE and SYHIK. Positions 357–445 are disordered; sequence LNDDNENSVH…KSKTTTPKPS (89 aa). Over residues 377–398 the composition is skewed to basic and acidic residues; the sequence is QKMEKTSTESEQKKPTETKPNA. Over residues 435-445 the composition is skewed to low complexity; the sequence is TKSKTTTPKPS.

Belongs to the mab-21 family. The cofactor is Mg(2+). Mn(2+) is required as a cofactor.

The enzyme catalyses GTP + ATP = 3',2'-cGAMP + 2 diphosphate. It carries out the reaction GTP + ATP = pppA(2'-5')pG + diphosphate. The catalysed reaction is pppA(2'-5')pG = 3',2'-cGAMP + diphosphate. The enzyme activity is specifically activated by double-stranded RNA (dsRNA). In terms of biological role, nucleotidyltransferase that catalyzes the formation of cyclic GMP-AMP (3',2'-cGAMP) from ATP and GTP and plays a key role in innate immunity. Synthesizes 3',2'-cGAMP in a two-step reaction through production of the linear intermediate pppA(2'-5')pG. Acts as a key sensor of double-stranded RNA (dsRNA), the presence of dsRNA in the cytoplasm being a danger signal that triggers the immune responses. Directly binds dsRNA, activating the nucleotidyltransferase activity, leading to synthesis of 3',2'-cGAMP, a second messenger that binds to and activates Sting, thereby triggering the antiviral immune response via activation of the NF-kappa-B transcription factor Rel (Relish). In Drosophila erecta (Fruit fly), this protein is Cyclic GMP-AMP synthase-like receptor 1.